The primary structure comprises 406 residues: Na(+)/H(+) antiporter NhaA (406 aa).

A run of 12 helical transmembrane segments spans residues 29–49 (FAGI…NNIF), 75–95 (FIEL…GLEM), 111–131 (ILPA…YMFF), 141–161 (GWAI…SFFS), 170–190 (AFII…LALF), 195–215 (INTP…ILNY), 220–240 (QLFY…ESGI), 242–262 (GTLC…GEFN), 278–298 (YFIL…YFAF), 306–326 (ILAL…LGIM), 349–369 (FYSI…IGSI), and 382–402 (AAVI…LKYC).

Belongs to the NhaA Na(+)/H(+) (TC 2.A.33) antiporter family.

It localises to the cell inner membrane. The enzyme catalyses Na(+)(in) + 2 H(+)(out) = Na(+)(out) + 2 H(+)(in). Na(+)/H(+) antiporter that extrudes sodium in exchange for external protons. This Rickettsia massiliae (strain Mtu5) protein is Na(+)/H(+) antiporter NhaA.